The sequence spans 33 residues: uncharacterized protein (33 aa).

The helical transmembrane segment at 11 to 31 threads the bilayer; that stretch reads LALVIYMSVVLLLMVGVPLLF.

It localises to the membrane. This is an uncharacterized protein from Saccharomyces cerevisiae (strain ATCC 204508 / S288c) (Baker's yeast).